The sequence spans 642 residues: Tigger transposable element-derived protein 5 (642 aa).

2 stretches are compositionally biased toward pro residues: residues 1 to 10 and 19 to 43; these read MYPAGPPAGP and LPGP…PGPR. The disordered stretch occupies residues 1-45; the sequence is MYPAGPPAGPVPRRGRRPLPGPPAPAPAPVPAARPPPPAPGPRPR. Residues 47 to 98 form the HTH psq-type domain; the sequence is AVKMAFRKAYSIKDKLQAIERVKGGERQASVCRDFGVPGGTLRGWLKDEPKL. 2 consecutive DNA-binding regions (H-T-H motif) follow at residues 74-94 and 145-178; these read QASV…WLKD and PLIQ…WQKR. Residues 112–185 form the HTH CENPB-type domain; sequence QRKKMRLANE…QKRHGISSQR (74 aa). Residues 185 to 233 form a disordered region; that stretch reads RFYGEAGPPAPSPAPGPPVKEEPALPSGAGPLPDRAPAPPPPAEGGYGD. Pro residues-rich tracts occupy residues 192-202 and 218-227; these read PPAPSPAPGPP and DRAPAPPPPA. 2 consecutive DDE-1 domains span residues 233 to 357 and 410 to 477; these read DEQI…VLLV and RAHI…ERCW. The tract at residues 535 to 587 is disordered; the sequence is LDDDGGPPEGCREEVGPALPPAAPPAPASLPSAMGGGEDEEEATDYGGTSVPT. Over residues 552–562 the composition is skewed to pro residues; it reads ALPPAAPPAPA.

It belongs to the tigger transposable element derived protein family.

Its subcellular location is the nucleus. This is Tigger transposable element-derived protein 5 (TIGD5) from Homo sapiens (Human).